Consider the following 262-residue polypeptide: tRNA pseudouridine synthase A (262 aa).

The Nucleophile role is filled by Asp51. Substrate is bound at residue Tyr109.

Belongs to the tRNA pseudouridine synthase TruA family. Homodimer.

It carries out the reaction uridine(38/39/40) in tRNA = pseudouridine(38/39/40) in tRNA. In terms of biological role, formation of pseudouridine at positions 38, 39 and 40 in the anticodon stem and loop of transfer RNAs. The sequence is that of tRNA pseudouridine synthase A from Legionella pneumophila (strain Paris).